The sequence spans 525 residues: Histidine-rich glycoprotein (525 aa).

An N-terminal signal peptide occupies residues 1–18 (MKVLTTALLLVTLQCSHA). One can recognise a Cystatin 1 domain in the interval 19–122 (LSPTNCDASK…ESQDLSVNGY (104 aa)). Disulfide bonds link C24–C504, C78–C89, C103–C124, C201–C414, and C216–C239. The interval 41 to 84 (GRRSGYTFQLLRVSDAHLDRVETATIYYLVLDVVESDCWVLSTK) is interaction with ATP5F1A. N-linked (GlcNAc...) asparagine glycans are attached at residues N112 and N123. The Cystatin 2 domain occupies 135–240 (NTKDSPVLVD…TPEYTDLICE (106 aa)). S145 bears the Phosphoserine mark. Residue N200 is glycosylated (N-linked (GlcNAc...) asparagine). Positions 275-445 (RDHHHTHKTH…GHSRKRGPGK (171 aa)) are disordered. Residues N322 and N330 are each glycosylated (N-linked (GlcNAc...) asparagine). Composition is skewed to basic residues over residues 339 to 392 (HGQH…HGHH) and 426 to 443 (QYHR…KRGP). Phosphoserine is present on S438.

Interacts with THBS1 (via the TSP type I repeats); the interaction blocks the antiangiogenic effect of THBS1 with CD36. Interacts with HPSE; the interaction is enhanced at acidic pH, partially inhibits binding of HPSE to cell surface receptors and modulates its enzymatic activity. Interacts (via the HRR domain) with TMP1; the interaction partially mediates the antiangiogenic properties of HRG. Interacts with kappa and lambda light chains of IgG molecules. Interacts with ATP5F1A; the interaction occurs on the surface of T-cells and alters their cell morphology in concert with CONA. Binds IgG molecules containing kappa and lambda light chains and inhibits the formation of insoluble immunoglobulin complexes. Interacts with F12; the interaction, which is enhanced in the presence of zinc ions and inhibited by heparin-binding to HRG, inhibits factor XII autoactivation and contact-initiated coagulation. Interacts with PLG (via its Kringle domains); the interaction tethers PLG to the cell surface and enhances its activation. Interacts (via the HRR domain) with TPM1; the interaction appears to contribute to the antiangiogenic properties of the HRR domain. Interacts with THBS2; the interaction blocks the antiangiogenic effect of THBS2 with CD36. Post-translationally, N-glycosylated. Proteolytic cleavage produces several HRG fragments which are mostly disulfide-linked and, therefore, not released. Cleavage by plasmin is inhibited in the presence of heparin, zinc ions or in an acidic environment. Cleavage reduces binding of HRG to heparan sulfate, but enhances the ability of HRG to bind and tether plasminogen to the cell surface. On platelet activation, releases a 33 kDa antiangiogenic peptide which encompasses the HRR. Also cleaved in the C-terminal by plasmin. As to expression, expressed in liver, blood plasma, serum and in platelets. Also present in fibrin clots, wound fluid from acute wounds and chronic leg ulcers.

It localises to the secreted. In terms of biological role, plasma glycoprotein that binds a number of ligands such as heme, heparin, heparan sulfate, thrombospondin, plasminogen, and divalent metal ions. Inhibits rosette formation. Acts as an adapter protein and implicated in regulating many processes such as immune complex and pathogen clearance, cell adhesion, angiogenesis, coagulation and fibrinolysis. Mediates clearance of necrotic cells through enhancing the phagocytosis of necrotic cells in a heparan sulfate-dependent pathway. This process can be regulated by the presence of certain HRG ligands such as heparin and zinc ions. Binds to IgG subclasses of immunoglobins containing kappa and lambda light chains with different affinities regulating their clearance and inhibiting the formation of insoluble immune complexes. Tethers plasminogen to the cell surface. Binds T-cells and alters the cell morphology. Modulates angiogenesis by blocking the CD6-mediated antiangiongenic effect of thrombospondins, THBS1 and THBS2. This chain is Histidine-rich glycoprotein (Hrg), found in Rattus norvegicus (Rat).